A 623-amino-acid polypeptide reads, in one-letter code: Bifunctional methionine biosynthesis protein MetXA/MetW (623 aa).

Residues 1 to 17 show a composition bias toward polar residues; the sequence is MTSGRSTRVTMFESQAS. The interval 1-30 is disordered; that stretch reads MTSGRSTRVTMFESQASMGEPSNEDLSSTD. One can recognise an AB hydrolase-1 domain in the interval 77–385; the sequence is NAVLVCHAVS…TTNAGHDAFL (309 aa). Serine 183 functions as the Nucleophile in the catalytic mechanism. Arginine 253 is a substrate binding site. Active-site residues include aspartate 348 and histidine 381. Position 382 (aspartate 382) interacts with substrate. A metW region spans residues 417–619; it reads NVDEESILEI…NADTAVIAFH (203 aa).

In the N-terminal section; belongs to the AB hydrolase superfamily. MetX family. This sequence in the C-terminal section; belongs to the MetW family. In terms of assembly, homodimer.

Its subcellular location is the cytoplasm. The enzyme catalyses L-homoserine + acetyl-CoA = O-acetyl-L-homoserine + CoA. It functions in the pathway amino-acid biosynthesis; L-methionine biosynthesis via de novo pathway; O-acetyl-L-homoserine from L-homoserine: step 1/1. Its function is as follows. Transfers an acetyl group from acetyl-CoA to L-homoserine, forming acetyl-L-homoserine. The protein is Bifunctional methionine biosynthesis protein MetXA/MetW of Rhodopirellula baltica (strain DSM 10527 / NCIMB 13988 / SH1).